The primary structure comprises 93 residues: Large ribosomal subunit protein uL23cz/uL23cy (93 aa).

Belongs to the universal ribosomal protein uL23 family. In terms of assembly, part of the 50S ribosomal subunit.

It localises to the plastid. Its subcellular location is the chloroplast. Its function is as follows. Binds to 23S rRNA. This is Large ribosomal subunit protein uL23cz/uL23cy (rpl23-A) from Arabidopsis thaliana (Mouse-ear cress).